The primary structure comprises 156 residues: Small ribosomal subunit protein uS7 (156 aa).

It belongs to the universal ribosomal protein uS7 family. In terms of assembly, part of the 30S ribosomal subunit. Contacts proteins S9 and S11.

One of the primary rRNA binding proteins, it binds directly to 16S rRNA where it nucleates assembly of the head domain of the 30S subunit. Is located at the subunit interface close to the decoding center, probably blocks exit of the E-site tRNA. In Kocuria rhizophila (strain ATCC 9341 / DSM 348 / NBRC 103217 / DC2201), this protein is Small ribosomal subunit protein uS7.